Consider the following 308-residue polypeptide: tRNA dimethylallyltransferase (308 aa).

9–16 (GPTAVGKT) serves as a coordination point for ATP. Position 11-16 (11-16 (TAVGKT)) interacts with substrate. Residues 34 to 37 (DSMQ) are interaction with substrate tRNA.

This sequence belongs to the IPP transferase family. As to quaternary structure, monomer. Mg(2+) is required as a cofactor.

It catalyses the reaction adenosine(37) in tRNA + dimethylallyl diphosphate = N(6)-dimethylallyladenosine(37) in tRNA + diphosphate. In terms of biological role, catalyzes the transfer of a dimethylallyl group onto the adenine at position 37 in tRNAs that read codons beginning with uridine, leading to the formation of N6-(dimethylallyl)adenosine (i(6)A). In Lactobacillus delbrueckii subsp. bulgaricus (strain ATCC 11842 / DSM 20081 / BCRC 10696 / JCM 1002 / NBRC 13953 / NCIMB 11778 / NCTC 12712 / WDCM 00102 / Lb 14), this protein is tRNA dimethylallyltransferase.